The chain runs to 158 residues: C-type lectin mannose-binding isoform (158 aa).

The N-terminal stretch at 1 to 23 (MGRFLLVTLSLLVGAFSLNEANS) is a signal peptide. Cystine bridges form between C26/C37, C54/C154, C61/C156, and C129/C146. The 123-residue stretch at 33 to 155 (KNGFCYKVFN…CKALYSFICQ (123 aa)) folds into the C-type lectin domain. Residues 119–121 (EPN) carry the Mannose-binding motif. An N-linked (GlcNAc...) asparagine glycan is attached at N121. 3 residues coordinate Ca(2+): E127, N142, and D143.

It belongs to the true venom lectin family. In terms of assembly, dimer. Probably disulfide-linked homodimer. As to expression, expressed by the venom gland.

The protein localises to the secreted. In terms of biological role, mannose-binding lectin that binds to and agglutinates rabbit (but not human) erythrocytes in a calcium-dependent manner. In Oxyuranus scutellatus (Coastal taipan), this protein is C-type lectin mannose-binding isoform.